The following is a 573-amino-acid chain: uncharacterized protein (573 aa).

An ABC transmembrane type-1 domain is found at 15–298; the sequence is AGIALILMLT…FPFLIMIFTR (284 aa). 6 helical membrane-spanning segments follow: residues 17 to 37, 52 to 72, 127 to 147, 153 to 173, 238 to 258, and 275 to 295; these read IALI…LLIA, VWIW…AGML, IFMS…GIVL, VKLG…LLWV, FTMP…LWAG, and IINY…LIMI. The region spanning 330 to 563 is the ABC transporter domain; it reads IEFQHVSFRY…SQLYKRIYES (234 aa). 364–371 is an ATP binding site; it reads GATGSGKS.

The protein belongs to the ABC transporter superfamily.

It localises to the cell membrane. This is an uncharacterized protein from Bacillus subtilis (strain 168).